A 307-amino-acid polypeptide reads, in one-letter code: Aspartate carbamoyltransferase catalytic subunit (307 aa).

The carbamoyl phosphate site is built by Arg58 and Thr59. Lys86 is an L-aspartate binding site. Positions 108, 136, and 139 each coordinate carbamoyl phosphate. Arg169 and Arg223 together coordinate L-aspartate. Residues Gly264 and Pro265 each coordinate carbamoyl phosphate.

Belongs to the aspartate/ornithine carbamoyltransferase superfamily. ATCase family. Heterododecamer (2C3:3R2) of six catalytic PyrB chains organized as two trimers (C3), and six regulatory PyrI chains organized as three dimers (R2).

The enzyme catalyses carbamoyl phosphate + L-aspartate = N-carbamoyl-L-aspartate + phosphate + H(+). Its pathway is pyrimidine metabolism; UMP biosynthesis via de novo pathway; (S)-dihydroorotate from bicarbonate: step 2/3. Catalyzes the condensation of carbamoyl phosphate and aspartate to form carbamoyl aspartate and inorganic phosphate, the committed step in the de novo pyrimidine nucleotide biosynthesis pathway. This chain is Aspartate carbamoyltransferase catalytic subunit, found in Moorella thermoacetica (strain ATCC 39073 / JCM 9320).